The sequence spans 872 residues: Valine--tRNA ligase (872 aa).

A 'HIGH' region motif is present at residues 49-59 (PNVTGILHIGH). The short motif at 531–535 (KMSKS) is the 'KMSKS' region element. Lys534 is a binding site for ATP. Positions 810-871 (PLIARLKKQL…IQQELDLLEQ (62 aa)) form a coiled coil.

This sequence belongs to the class-I aminoacyl-tRNA synthetase family. ValS type 1 subfamily. In terms of assembly, monomer.

Its subcellular location is the cytoplasm. It carries out the reaction tRNA(Val) + L-valine + ATP = L-valyl-tRNA(Val) + AMP + diphosphate. Its function is as follows. Catalyzes the attachment of valine to tRNA(Val). As ValRS can inadvertently accommodate and process structurally similar amino acids such as threonine, to avoid such errors, it has a 'posttransfer' editing activity that hydrolyzes mischarged Thr-tRNA(Val) in a tRNA-dependent manner. This chain is Valine--tRNA ligase, found in Helicobacter pylori (strain J99 / ATCC 700824) (Campylobacter pylori J99).